The chain runs to 185 residues: MFRQSIRPLVSNRLTFIRYNSSPAYTAAVSLLKGDLKKAMIAKDEMKKTAIRSMLSAIKNKEIALKGKSADEYSLYDMYSKLISQRKDSINEFLANKRDDLVAKEQGEMDIIKKYMDQLPVSSELDIDQNVKKLLDALKTKAGEKKVQIKEIMGEIDWKSLPTEWKTSPTAIKNSIVKQFKEIFK.

The transit peptide at M1 to N20 directs the protein to the mitochondrion.

The protein belongs to the AIM41 family.

It localises to the mitochondrion. The polypeptide is Altered inheritance of mitochondria protein 41, mitochondrial (AIM41) (Saccharomyces cerevisiae (strain YJM789) (Baker's yeast)).